Consider the following 124-residue polypeptide: Glycine cleavage system H protein (124 aa).

The Lipoyl-binding domain occupies 19-101 (VATVGITDHA…ESGAWFFRMT (83 aa)). Residue K60 is modified to N6-lipoyllysine.

This sequence belongs to the GcvH family. In terms of assembly, the glycine cleavage system is composed of four proteins: P, T, L and H. The cofactor is (R)-lipoate.

The glycine cleavage system catalyzes the degradation of glycine. The H protein shuttles the methylamine group of glycine from the P protein to the T protein. This is Glycine cleavage system H protein from Acidiphilium cryptum (strain JF-5).